A 434-amino-acid chain; its full sequence is Trigger factor (434 aa).

One can recognise a PPIase FKBP-type domain in the interval 160–245 (GDKVKMNFVG…LTEVLAANLP (86 aa)).

It belongs to the FKBP-type PPIase family. Tig subfamily.

It is found in the cytoplasm. It catalyses the reaction [protein]-peptidylproline (omega=180) = [protein]-peptidylproline (omega=0). In terms of biological role, involved in protein export. Acts as a chaperone by maintaining the newly synthesized protein in an open conformation. Functions as a peptidyl-prolyl cis-trans isomerase. The protein is Trigger factor of Shewanella sp. (strain ANA-3).